Reading from the N-terminus, the 412-residue chain is Serine hydroxymethyltransferase (412 aa).

Residues Leu117 and 121–123 (GHL) each bind (6S)-5,6,7,8-tetrahydrofolate. N6-(pyridoxal phosphate)lysine is present on Lys226. (6S)-5,6,7,8-tetrahydrofolate-binding positions include Glu242 and 350-352 (SPF).

It belongs to the SHMT family. As to quaternary structure, homodimer. Requires pyridoxal 5'-phosphate as cofactor.

The protein resides in the cytoplasm. It catalyses the reaction (6R)-5,10-methylene-5,6,7,8-tetrahydrofolate + glycine + H2O = (6S)-5,6,7,8-tetrahydrofolate + L-serine. It functions in the pathway one-carbon metabolism; tetrahydrofolate interconversion. It participates in amino-acid biosynthesis; glycine biosynthesis; glycine from L-serine: step 1/1. In terms of biological role, catalyzes the reversible interconversion of serine and glycine with tetrahydrofolate (THF) serving as the one-carbon carrier. Appears to be specific for THF as the pteridine substrate, since the use of tetrahydromethanopterin (H4MPT) is much less efficient. Also exhibits THF-independent aldolase activity toward beta-hydroxyamino acids, producing glycine and aldehydes, via a retro-aldol mechanism. Thus, is able to catalyze the cleavage of L-allo-threonine and L-threo-beta-phenylserine. The polypeptide is Serine hydroxymethyltransferase (Methanosarcina barkeri (strain Fusaro / DSM 804)).